The following is a 115-amino-acid chain: Type 3 secretion system chaperone YscG (115 aa).

This sequence belongs to the YscG family. As to quaternary structure, component of the heterodimeric YscE-YscG chaperone. The YscE-YscG chaperone forms a stable ternary complex with YscF/SctF.

It localises to the cytoplasm. Its function is as follows. Chaperone of the type III secretion system (T3SS), also called injectisome, which is used to inject bacterial effector proteins into eukaryotic host cells. Along with YscE, prevents premature polymerization of the YscF/SctF needle protein within the cytoplasm. Required for Yop secretion. The protein is Type 3 secretion system chaperone YscG of Yersinia enterocolitica.